We begin with the raw amino-acid sequence, 594 residues long: Proteasome-associated ATPase (594 aa).

A compositionally biased stretch (polar residues) spans Met-1 to Ser-10. The interval Met-1–Glu-23 is disordered. Residues Ala-35–Gln-86 adopt a coiled-coil conformation. Residue Gly-282–Leu-287 coordinates ATP. The tract at residues Tyr-593–Leu-594 is docks into pockets in the proteasome alpha-ring.

It belongs to the AAA ATPase family. In terms of assembly, homohexamer. Assembles into a hexameric ring structure that caps the 20S proteasome core. Strongly interacts with the prokaryotic ubiquitin-like protein Pup through a hydrophobic interface; the interacting region of ARC lies in its N-terminal coiled-coil domain. There is one Pup binding site per ARC hexamer ring. Upon ATP-binding, the C-terminus of ARC interacts with the alpha-rings of the proteasome core, possibly by binding to the intersubunit pockets.

It participates in protein degradation; proteasomal Pup-dependent pathway. In terms of biological role, ATPase which is responsible for recognizing, binding, unfolding and translocation of pupylated proteins into the bacterial 20S proteasome core particle. May be essential for opening the gate of the 20S proteasome via an interaction with its C-terminus, thereby allowing substrate entry and access to the site of proteolysis. Thus, the C-termini of the proteasomal ATPase may function like a 'key in a lock' to induce gate opening and therefore regulate proteolysis. This is Proteasome-associated ATPase from Arthrobacter sp. (strain FB24).